We begin with the raw amino-acid sequence, 590 residues long: Ras-specific guanine nucleotide-releasing factor RalGPS2 (590 aa).

The Ras-GEF domain maps to 49-287; that stretch reads TPEEYAGQIT…YKLSLKIEPG (239 aa). The segment at 288-319 is disordered; the sequence is ASTPRSAASREDLAGPDIGASPQGGRKSSAAA. S293, S296, and S308 each carry phosphoserine. Residues 331–334 carry the PXXP motif; it reads PQTP. At T333 the chain carries Phosphothreonine. 2 positions are modified to phosphoserine: S336 and S350. Position 368 is a phosphothreonine (T368). The segment at 380–413 is disordered; that stretch reads DSVMEPHAPSRGQAESSTLSSGISIGSSDGSELS. Residue S381 is modified to Phosphoserine. Low complexity predominate over residues 394–410; it reads ESSTLSSGISIGSSDGS. At S429 the chain carries Phosphoserine. Positions 464–576 constitute a PH domain; that stretch reads AVTIQGVLRR…WFKHLSAACQ (113 aa). The required for stimulation of nucleotide exchange by RALA stretch occupies residues 466–590; sequence TIQGVLRRKT…QVPTNLMTFE (125 aa).

In terms of assembly, interacts with RALA. Interacts with the SH3 domains of GRB2 and PLCG1. In terms of tissue distribution, abundant in brain and testis.

It is found in the cytoplasm. It localises to the cell membrane. Functionally, guanine nucleotide exchange factor for the small GTPase RALA. May be involved in cytoskeletal organization. May also be involved in the stimulation of transcription in a Ras-independent fashion. This is Ras-specific guanine nucleotide-releasing factor RalGPS2 (Ralgps2) from Mus musculus (Mouse).